A 351-amino-acid polypeptide reads, in one-letter code: Ribosomal RNA large subunit methyltransferase M (351 aa).

S-adenosyl-L-methionine is bound by residues Ser-186, 219–222 (APGG), Asp-238, Asp-258, and Asp-274. Lys-303 serves as the catalytic Proton acceptor.

Belongs to the class I-like SAM-binding methyltransferase superfamily. RNA methyltransferase RlmE family. RlmM subfamily. As to quaternary structure, monomer.

Its subcellular location is the cytoplasm. It carries out the reaction cytidine(2498) in 23S rRNA + S-adenosyl-L-methionine = 2'-O-methylcytidine(2498) in 23S rRNA + S-adenosyl-L-homocysteine + H(+). Its function is as follows. Catalyzes the 2'-O-methylation at nucleotide C2498 in 23S rRNA. The sequence is that of Ribosomal RNA large subunit methyltransferase M from Xylella fastidiosa (strain 9a5c).